The following is a 218-amino-acid chain: Large ribosomal subunit protein bL25 (218 aa).

The disordered stretch occupies residues 197–218 (PAEESGEKPVAHIEEKESTEKE). Residues 201-218 (SGEKPVAHIEEKESTEKE) show a composition bias toward basic and acidic residues.

The protein belongs to the bacterial ribosomal protein bL25 family. CTC subfamily. As to quaternary structure, part of the 50S ribosomal subunit; part of the 5S rRNA/L5/L18/L25 subcomplex. Contacts the 5S rRNA. Binds to the 5S rRNA independently of L5 and L18.

Its function is as follows. This is one of the proteins that binds to the 5S RNA in the ribosome where it forms part of the central protuberance. This chain is Large ribosomal subunit protein bL25, found in Dehalococcoides mccartyi (strain ATCC BAA-2100 / JCM 16839 / KCTC 5957 / BAV1).